The sequence spans 247 residues: Ferredoxin:CoB-CoM heterodisulfide reductase subunit C (247 aa).

In terms of domain architecture, 4Fe-4S ferredoxin-type spans 32 to 62; that stretch reads TPESLGLDRCIQCGACTASCPAARFTDYSPR. Residues C41, C44, C47, C51, C84, C87, C90, and C94 each contribute to the [4Fe-4S] cluster site. The span at 216 to 240 shows a compositional bias: basic and acidic residues; sequence RTGTSCTEKKKNSGDLGFESDREYT. The tract at residues 216–247 is disordered; that stretch reads RTGTSCTEKKKNSGDLGFESDREYTGQEALTV.

Belongs to the HdrC family. In terms of assembly, the ferredoxin:CoB-CoM heterodisulfide reductase is composed of three subunits; HdrA1, HdrB1 and HdrC1. [4Fe-4S] cluster serves as cofactor.

The protein localises to the cytoplasm. It carries out the reaction coenzyme B + coenzyme M + 2 oxidized [2Fe-2S]-[ferredoxin] = coenzyme M-coenzyme B heterodisulfide + 2 reduced [2Fe-2S]-[ferredoxin] + 2 H(+). The protein operates within cofactor metabolism; coenzyme M-coenzyme B heterodisulfide reduction; coenzyme B and coenzyme M from coenzyme M-coenzyme B heterodisulfide: step 1/1. Functionally, part of a complex that catalyzes the reversible reduction of CoM-S-S-CoB to the thiol-coenzymes H-S-CoM (coenzyme M) and H-S-CoB (coenzyme B). Probably involved in methylotrophic methanogenesis but not in aceticlastic methanogenesis. The sequence is that of Ferredoxin:CoB-CoM heterodisulfide reductase subunit C from Methanosarcina acetivorans (strain ATCC 35395 / DSM 2834 / JCM 12185 / C2A).